Here is a 123-residue protein sequence, read N- to C-terminus: Small ribosomal subunit protein uS13 (123 aa).

Residues 97–123 (PVRGQRTHTNAKTRKGRSKLPVAAKKK) are disordered.

Belongs to the universal ribosomal protein uS13 family. As to quaternary structure, part of the 30S ribosomal subunit. Forms a loose heterodimer with protein S19. Forms two bridges to the 50S subunit in the 70S ribosome.

Functionally, located at the top of the head of the 30S subunit, it contacts several helices of the 16S rRNA. In the 70S ribosome it contacts the 23S rRNA (bridge B1a) and protein L5 of the 50S subunit (bridge B1b), connecting the 2 subunits; these bridges are implicated in subunit movement. Contacts the tRNAs in the A and P-sites. In Ehrlichia canis (strain Jake), this protein is Small ribosomal subunit protein uS13.